Here is a 700-residue protein sequence, read N- to C-terminus: Kin of IRRE-like protein 2 (700 aa).

An N-terminal signal peptide occupies residues 1-19; the sequence is MLASALLVFLCCFKGHAGS. At 20-507 the chain is on the extracellular side; the sequence is SPHFLQQPED…GRRDLLPTVR (488 aa). 5 Ig-like C2-type domains span residues 21–115, 120–219, 224–304, 309–391, and 395–497; these read PHFL…AQLH, PEAP…VTLS, PMVT…TALE, PILQ…ARLT, and PPVV…QIHL. An intrachain disulfide couples Cys-42 to Cys-100. Asn-140 is a glycosylation site (N-linked (GlcNAc...) asparagine). Disulfide bonds link Cys-143-Cys-201 and Cys-245-Cys-288. Residues 146–148 carry the Cell attachment site motif; that stretch reads RGD. A glycan (N-linked (GlcNAc...) asparagine) is linked at Asn-298. 2 cysteine pairs are disulfide-bonded: Cys-330–Cys-372 and Cys-416–Cys-482. Asn-481 is a glycosylation site (N-linked (GlcNAc...) asparagine). The helical transmembrane segment at 508–528 threads the bilayer; the sequence is IVAGAASAATSLLMVITGVVL. Topologically, residues 529-700 are cytoplasmic; it reads CCWRHGSLSK…PSHQRLQTHV (172 aa). The segment at 542–576 is disordered; the sequence is LVRIPGSSEGSSSRGPEEETGSSEDRGPIVHTDHS. Position 563 is a phosphoserine (Ser-563). Residues 564 to 576 show a composition bias toward basic and acidic residues; the sequence is SEDRGPIVHTDHS. A phosphotyrosine mark is found at Tyr-595, Tyr-596, and Tyr-653. Residues 671 to 700 form a disordered region; sequence FGPPELSSGTPPFPYATLSPPSHQRLQTHV. Residues 689–700 are compositionally biased toward polar residues; that stretch reads SPPSHQRLQTHV.

The protein belongs to the immunoglobulin superfamily. In terms of assembly, homodimer. Interacts with NPHS2/podocin (via the C-terminus). Interacts with NPHS1 (via the Ig-like domains). Interacts with FYN. N-glycosylated. In terms of processing, phosphorylated at Ser-548 or Ser-549; due to site ambiguity, the exact position of the serine phosphorylation could not be determined. Phosphorylation at residues Tyr-631 and/or Tyr-632. FYN mediates tyrosine phosphorylation in pancreatic beta-cells. Post-translationally, the extracellular domain is cleaved leading to the generation of a soluble fragment and a membrane-bound C-terminal fragment, which is further cleaved by gamma-secretase. In terms of tissue distribution, highly expressed in beta-cells of the pancreatic islets. Expression is seen in podocytes of kidney glomeruli, and in the cerebellum and hindbrain at 12.5 dpc, in the spinal cord at 10.5 dpc, and in retina and hypothalamus at 13.5 dpc.

It is found in the cell membrane. In terms of biological role, may regulate basal insulin secretion. In Mus musculus (Mouse), this protein is Kin of IRRE-like protein 2 (Kirrel2).